A 276-amino-acid polypeptide reads, in one-letter code: NAD-capped RNA hydrolase NudC (276 aa).

Residue Arg-82 coordinates substrate. The Zn(2+) site is built by Cys-112 and Cys-115. Position 125 (Glu-125) interacts with substrate. Residues Cys-130 and Cys-133 each contribute to the Zn(2+) site. Tyr-138 is a binding site for substrate. The region spanning 139-262 (PRISPSMIVL…SIARYLIDLY (124 aa)) is the Nudix hydrolase domain. Residues Ala-172, Glu-188, and Glu-192 each coordinate a divalent metal cation. A Nudix box motif is present at residues 173–194 (GFAEPGESAEDCLIREVREEVS). 206-213 (QCWPFPHS) serves as a coordination point for substrate. Position 233 (Glu-233) interacts with a divalent metal cation. Ala-255 lines the substrate pocket.

Belongs to the Nudix hydrolase family. NudC subfamily. As to quaternary structure, homodimer. The cofactor is Mg(2+). It depends on Mn(2+) as a cofactor. Zn(2+) serves as cofactor.

It catalyses the reaction a 5'-end NAD(+)-phospho-ribonucleoside in mRNA + H2O = a 5'-end phospho-adenosine-phospho-ribonucleoside in mRNA + beta-nicotinamide D-ribonucleotide + 2 H(+). The enzyme catalyses NAD(+) + H2O = beta-nicotinamide D-ribonucleotide + AMP + 2 H(+). The catalysed reaction is NADH + H2O = reduced beta-nicotinamide D-ribonucleotide + AMP + 2 H(+). Its function is as follows. mRNA decapping enzyme that specifically removes the nicotinamide adenine dinucleotide (NAD) cap from a subset of mRNAs by hydrolyzing the diphosphate linkage to produce nicotinamide mononucleotide (NMN) and 5' monophosphate mRNA. The NAD-cap is present at the 5'-end of some mRNAs and stabilizes RNA against 5'-processing. Has preference for mRNAs with a 5'-end purine. Catalyzes the hydrolysis of a broad range of dinucleotide pyrophosphates. This chain is NAD-capped RNA hydrolase NudC, found in Pseudomonas fluorescens (strain ATCC BAA-477 / NRRL B-23932 / Pf-5).